The primary structure comprises 262 residues: Octanoyltransferase (262 aa).

The region spanning 41-232 (PQLPDGLLLL…SFCQVFGLQA (192 aa)) is the BPL/LPL catalytic domain. Substrate-binding positions include 96–103 (RGGEVTYH), 163–165 (AIG), and 176–178 (GFA). Residue Cys194 is the Acyl-thioester intermediate of the active site.

It belongs to the LipB family.

The protein localises to the cytoplasm. It carries out the reaction octanoyl-[ACP] + L-lysyl-[protein] = N(6)-octanoyl-L-lysyl-[protein] + holo-[ACP] + H(+). The protein operates within protein modification; protein lipoylation via endogenous pathway; protein N(6)-(lipoyl)lysine from octanoyl-[acyl-carrier-protein]: step 1/2. Catalyzes the transfer of endogenously produced octanoic acid from octanoyl-acyl-carrier-protein onto the lipoyl domains of lipoate-dependent enzymes. Lipoyl-ACP can also act as a substrate although octanoyl-ACP is likely to be the physiological substrate. This chain is Octanoyltransferase, found in Synechococcus sp. (strain JA-2-3B'a(2-13)) (Cyanobacteria bacterium Yellowstone B-Prime).